The sequence spans 156 residues: 16 kDa phloem protein 1 (156 aa).

The region spanning 1–108 (MAVGILEVSL…LEMGVEKGTA (108 aa)) is the C2 domain. Positions 20, 26, 78, 80, 83, and 86 each coordinate Ca(2+).

Requires Ca(2+) as cofactor.

Binds to both sense and antisense RNA. Can also bind sheared DNA and dodecamer DNA with a low affinity. Interacts with mesophyll plasmodesmata to mediate its own cell-to-cell transport and potentiate RNA trafficking. May play a role in plant defense signaling. The chain is 16 kDa phloem protein 1 from Arabidopsis thaliana (Mouse-ear cress).